The primary structure comprises 1005 residues: DNA double-strand break repair Rad50 ATPase (1005 aa).

ATP is bound by residues Lys14, 35-40, 62-64, and Gln134; these read GSGKSS and ITK. Coiled coils occupy residues 189 to 230, 292 to 321, 346 to 379, and 404 to 498; these read KENY…IEKL, LVDEIRKIESRLRELKSHYEDYLKLTKQLE, LDTLLNKIKDEIERVETIKDLLEELKNLNEEIEK, and AVEY…LKEV. In terms of domain architecture, Zinc-hook spans 457 to 554; that stretch reads IEEKKKVLEN…DIEKLKKEID (98 aa). Positions 502 and 505 each coordinate Zn(2+). Coiled-coil stretches lie at residues 523 to 600, 656 to 692, and 800 to 834; these read TQLN…YVIN, KEKCREELNKLREDEREINRLKDKLNELKNKEKELIE, and RQELDNVREQKTEIETGIEYLKKDVESLKARLKEM.

The protein belongs to the SMC family. RAD50 subfamily. In terms of assembly, homodimer. Forms a heterotetramer composed of two Mre11 subunits and two Rad50 subunits. It depends on Zn(2+) as a cofactor.

Part of the Rad50/Mre11 complex, which is involved in the early steps of DNA double-strand break (DSB) repair. The complex may facilitate opening of the processed DNA ends to aid in the recruitment of HerA and NurA. Rad50 controls the balance between DNA end bridging and DNA resection via ATP-dependent structural rearrangements of the Rad50/Mre11 complex. This is DNA double-strand break repair Rad50 ATPase from Methanocaldococcus jannaschii (strain ATCC 43067 / DSM 2661 / JAL-1 / JCM 10045 / NBRC 100440) (Methanococcus jannaschii).